Here is a 391-residue protein sequence, read N- to C-terminus: RNA-binding motif protein, X chromosome (391 aa).

Methionine 1 bears the N-acetylmethionine; in Heterogeneous nuclear ribonucleoprotein G; alternate mark. Residue valine 2 is modified to N-acetylvaline; in Heterogeneous nuclear ribonucleoprotein G, N-terminally processed. The region spanning 8-86 (GKLFIGGLNT…KAIKVEQATK (79 aa)) is the RRM domain. A Glycyl lysine isopeptide (Lys-Gly) (interchain with G-Cter in SUMO2) cross-link involves residue lysine 22. N6-acetyllysine is present on lysine 30. A compositionally biased stretch (basic and acidic residues) spans 61 to 80 (DAKDAARDMNGKSLDGKAIK). Positions 61-391 (DAKDAARDMN…SDRGGGRSRY (331 aa)) are disordered. Glycyl lysine isopeptide (Lys-Gly) (interchain with G-Cter in SUMO2) cross-links involve residues lysine 80 and lysine 86. Residues serine 88 and serine 91 each carry the phosphoserine modification. Residues 109–120 (LRGGRGGSGGTR) are compositionally biased toward gly residues. Omega-N-methylarginine occurs at positions 125, 144, and 164. The span at 151–164 (RGPPPRSGGPPPKR) shows a compositional bias: pro residues. Serine 165 carries the phosphoserine modification. Position 172 is an omega-N-methylarginine (arginine 172). Serine 174 carries the post-translational modification Phosphoserine. The segment at 186 to 236 (GRDSYGGPPRREPLPSRRDVYLSPRDDGYSTKDSYSSRDYPSSRDTRDYAP) is necessary for the association to nascent RNAPII transcripts and nuclear localization. 2 stretches are compositionally biased toward basic and acidic residues: residues 194-215 (PRRE…DGYS) and 241-274 (YTYR…DYSD). A phosphoserine mark is found at serine 261, serine 328, serine 329, serine 330, and serine 332. The span at 323-337 (SRDSYSSSRSDLYSS) shows a compositional bias: low complexity. The tract at residues 333-391 (DLYSSGRDRVGRQDRGLPPSMERGYPPPRDSYSSSSRGAPRGGGRGGSRSDRGGGRSRY) is necessary for RNA-binding. The segment covering 338-347 (GRDRVGRQDR) has biased composition (basic and acidic residues). Residue serine 352 is modified to Phosphoserine. Positions 362–371 (DSYSSSSRGA) are enriched in low complexity. Over residues 380 to 391 (SRSDRGGGRSRY) the composition is skewed to basic and acidic residues.

As to quaternary structure, homomultimer. Found in the supraspliceosome complex. Identified in the spliceosome C complex. Forms a complex with ILF2, ILF3, YLPM1, KHDRBS1, NCOA5 and PPP1CA. Interacts with CLK2, KHDRBS2, KHDRBS3, SAFB/SAFB1, TRA2B and YTHDC1. Interacts with ERAP1; the interaction is RNA-independent. Interacts with PPIA/CYPA. In terms of processing, O-glycosylated. Post-translationally, arg-185 is dimethylated, probably to asymmetric dimethylarginine.

The protein localises to the nucleus. In terms of biological role, RNA-binding protein that plays several role in the regulation of pre- and post-transcriptional processes. Implicated in tissue-specific regulation of gene transcription and alternative splicing of several pre-mRNAs. Binds to and stimulates transcription from the tumor suppressor TXNIP gene promoter; may thus be involved in tumor suppression. When associated with SAFB, binds to and stimulates transcription from the SREBF1 promoter. Associates with nascent mRNAs transcribed by RNA polymerase II. Component of the supraspliceosome complex that regulates pre-mRNA alternative splice site selection. Can either activate or suppress exon inclusion; acts additively with TRA2B to promote exon 7 inclusion of the survival motor neuron SMN. Represses the splicing of MAPT/Tau exon 10. Binds preferentially to single-stranded 5'-CC[A/C]-rich RNA sequence motifs localized in a single-stranded conformation; probably binds RNA as a homodimer. Binds non-specifically to pre-mRNAs. Also plays a role in the cytoplasmic TNFR1 trafficking pathways; promotes both the IL-1-beta-mediated inducible proteolytic cleavage of TNFR1 ectodomains and the release of TNFR1 exosome-like vesicles to the extracellular compartment. In Macaca fascicularis (Crab-eating macaque), this protein is RNA-binding motif protein, X chromosome (RBMX).